The following is a 472-amino-acid chain: GTPase Der (472 aa).

EngA-type G domains follow at residues 3-166 (PVIA…PEQE) and 176-349 (IRIG…DSAM). GTP contacts are provided by residues 9 to 16 (GRPNVGKS), 56 to 60 (DTGGI), 118 to 121 (NKID), 182 to 189 (GRPNVGKS), 229 to 233 (DTAGV), and 294 to 297 (NKWD). One can recognise a KH-like domain in the interval 350–434 (AKWSTNQLTT…PIRFEFRSGE (85 aa)). Positions 433–472 (GENPFAGKKNKLSPRQQKKKERLMKHVKKLKHKQKRKKSR) are disordered. A compositionally biased stretch (basic residues) spans 440-472 (KKNKLSPRQQKKKERLMKHVKKLKHKQKRKKSR).

It belongs to the TRAFAC class TrmE-Era-EngA-EngB-Septin-like GTPase superfamily. EngA (Der) GTPase family. Associates with the 50S ribosomal subunit.

Functionally, GTPase that plays an essential role in the late steps of ribosome biogenesis. In Hahella chejuensis (strain KCTC 2396), this protein is GTPase Der.